The sequence spans 395 residues: Phosphopentomutase (395 aa).

Positions 14, 286, 291, 327, 328, and 339 each coordinate Mn(2+).

This sequence belongs to the phosphopentomutase family. Mn(2+) serves as cofactor.

The protein localises to the cytoplasm. It catalyses the reaction 2-deoxy-alpha-D-ribose 1-phosphate = 2-deoxy-D-ribose 5-phosphate. The catalysed reaction is alpha-D-ribose 1-phosphate = D-ribose 5-phosphate. It participates in carbohydrate degradation; 2-deoxy-D-ribose 1-phosphate degradation; D-glyceraldehyde 3-phosphate and acetaldehyde from 2-deoxy-alpha-D-ribose 1-phosphate: step 1/2. Isomerase that catalyzes the conversion of deoxy-ribose 1-phosphate (dRib-1-P) and ribose 1-phosphate (Rib-1-P) to deoxy-ribose 5-phosphate (dRib-5-P) and ribose 5-phosphate (Rib-5-P), respectively. In Staphylococcus saprophyticus subsp. saprophyticus (strain ATCC 15305 / DSM 20229 / NCIMB 8711 / NCTC 7292 / S-41), this protein is Phosphopentomutase.